A 277-amino-acid polypeptide reads, in one-letter code: MAVVTMKQLLDSGTHFGHQTRRWNPKMKRFIFTDRNGIYIIDLQQTLTFIDKAYEFVKETVARGGLVLFVGTKKQAQESVAAEATRVGMPYVNQRWLGGMLTNFSTVHKRLQRLKELEAMEQTGGFEGRTKKEILGLTREKNKLERSLGGIRDMAKVPSAIWVVDTNKEHIAVGEARKLGVPVIAILDTNCDPDEVDYPIPGNDDAIRSAELLTTVIASAVAEGLQVRAGLRCGDGKPETEAVEPLPEWEQELLAGAGSSALNDSGADLSEANPTEA.

Residues 254 to 277 form a disordered region; sequence LAGAGSSALNDSGADLSEANPTEA.

Belongs to the universal ribosomal protein uS2 family.

The polypeptide is Small ribosomal subunit protein uS2 (rpsB) (Mycobacterium leprae (strain TN)).